The sequence spans 189 residues: Ion-translocating oxidoreductase complex subunit B (189 aa).

The interval 1–26 (MSAVMIAVVLLGLLALVFGAILGFAA) is hydrophobic. The 59-residue stretch at 32-90 (EGDPLVDQVESLLPQTQCGQCGYPGCRPYAEAIAGGDQINKCPPGGTATMEKIAELMGV) folds into the 4Fe-4S domain. 12 residues coordinate [4Fe-4S] cluster: Cys49, Cys52, Cys57, Cys73, Cys114, Cys117, Cys120, Cys124, Cys144, Cys147, Cys150, and Cys154. 2 consecutive 4Fe-4S ferredoxin-type domains span residues 105–134 (KVAYIREDECIGCTKCIQACPVDAIVGAGK) and 136–164 (MHTVITQDCTGCDLCVEPCPVDCIDMLPV).

Belongs to the 4Fe4S bacterial-type ferredoxin family. RnfB subfamily. As to quaternary structure, the complex is composed of six subunits: RnfA, RnfB, RnfC, RnfD, RnfE and RnfG. Requires [4Fe-4S] cluster as cofactor.

It is found in the cell inner membrane. In terms of biological role, part of a membrane-bound complex that couples electron transfer with translocation of ions across the membrane. This is Ion-translocating oxidoreductase complex subunit B from Shewanella amazonensis (strain ATCC BAA-1098 / SB2B).